Here is a 294-residue protein sequence, read N- to C-terminus: Lipoyl synthase 1 (294 aa).

[4Fe-4S] cluster is bound by residues Cys38, Cys43, Cys49, Cys64, Cys68, Cys71, and Ser279. Residues 50-268 (FAGGTATFLI…EEGQTRFGFL (219 aa)) enclose the Radical SAM core domain.

The protein belongs to the radical SAM superfamily. Lipoyl synthase family. Requires [4Fe-4S] cluster as cofactor.

Its subcellular location is the cytoplasm. The enzyme catalyses [[Fe-S] cluster scaffold protein carrying a second [4Fe-4S](2+) cluster] + N(6)-octanoyl-L-lysyl-[protein] + 2 oxidized [2Fe-2S]-[ferredoxin] + 2 S-adenosyl-L-methionine + 4 H(+) = [[Fe-S] cluster scaffold protein] + N(6)-[(R)-dihydrolipoyl]-L-lysyl-[protein] + 4 Fe(3+) + 2 hydrogen sulfide + 2 5'-deoxyadenosine + 2 L-methionine + 2 reduced [2Fe-2S]-[ferredoxin]. Its pathway is protein modification; protein lipoylation via endogenous pathway; protein N(6)-(lipoyl)lysine from octanoyl-[acyl-carrier-protein]: step 2/2. In terms of biological role, catalyzes the radical-mediated insertion of two sulfur atoms into the C-6 and C-8 positions of the octanoyl moiety bound to the lipoyl domains of lipoate-dependent enzymes, thereby converting the octanoylated domains into lipoylated derivatives. This Prochlorococcus marinus (strain SARG / CCMP1375 / SS120) protein is Lipoyl synthase 1.